Reading from the N-terminus, the 158-residue chain is C-type lectin (158 aa).

The N-terminal stretch at 1 to 23 (MGHFTFISLCLMPIFLSLSGAEC) is a signal peptide. 4 disulfide bridges follow: cysteine 26–cysteine 37, cysteine 54–cysteine 154, cysteine 61–cysteine 156, and cysteine 129–cysteine 146. The C-type lectin domain maps to 33-155 (RNGLCYKLFD…CESLFAFICR (123 aa)). N-linked (GlcNAc...) asparagine glycosylation is found at asparagine 111 and asparagine 121. The Mannose-binding signature appears at 119 to 121 (EPN). Glutamate 127, asparagine 142, and aspartate 143 together coordinate Ca(2+).

This sequence belongs to the true venom lectin family. Homodimer; non-covalently linked. In terms of tissue distribution, expressed by the venom gland.

Its subcellular location is the secreted. Mannose-binding lectin which recognizes specific carbohydrate structures and agglutinates a variety of animal cells by binding to cell-surface glycoproteins and glycolipids. May be a calcium-dependent lectin. The protein is C-type lectin of Micrurus corallinus (Brazilian coral snake).